Consider the following 367-residue polypeptide: N-acetylmuramoyl-L-alanine amidase BlyA (367 aa).

The N-acetylmuramoyl-L-alanine amidase domain maps to 24 to 158 (VKKCVLHYTA…DITHKNCPAP (135 aa)). The segment at 178–204 (SGKSVSKASPTKPTTSSPSSSSAVSGS) is disordered. Residues 180-204 (KSVSKASPTKPTTSSPSSSSAVSGS) show a composition bias toward low complexity. SH3b domains are found at residues 202–271 (SGSL…YVDV) and 298–367 (GKIK…GSTI).

It belongs to the N-acetylmuramoyl-L-alanine amidase 2 family.

Its subcellular location is the secreted. The catalysed reaction is Hydrolyzes the link between N-acetylmuramoyl residues and L-amino acid residues in certain cell-wall glycopeptides.. Its function is as follows. Autolysins are involved in some important biological processes such as cell separation, cell-wall turnover, competence for genetic transformation, formation of the flagella and sporulation. Involved in prophage SP-beta-mediated cell lysis. The polypeptide is N-acetylmuramoyl-L-alanine amidase BlyA (blyA) (Bacillus subtilis (strain 168)).